Reading from the N-terminus, the 965-residue chain is PWWP domain-containing protein 4 (965 aa).

Residues 135-196 (VGDMVWGKVK…PAELIPFEPH (62 aa)) form the PWWP domain. The span at 437 to 455 (MNFTSSSGNIPGKKSSVSK) shows a compositional bias: polar residues. Disordered stretches follow at residues 437 to 507 (MNFT…KSSL), 526 to 577 (VVKR…KSSQ), 649 to 708 (SAKT…SLAP), and 905 to 927 (LSSQ…PPLD). Composition is skewed to basic and acidic residues over residues 456 to 474 (LSRD…RMGE) and 481 to 495 (DQEK…KQDE). The span at 496–507 (TGTNSRSNKSSL) shows a compositional bias: polar residues. Positions 546–553 (KKKEYVSE) match the Nuclear localization signal motif. A compositionally biased stretch (basic and acidic residues) spans 549–563 (EYVSELNRDTPDKRK). Positions 657 to 676 (NEQSKAGRNRISSDSQQDVP) are enriched in polar residues. Residues 691–702 (ASDKKTNQDATK) show a composition bias toward basic and acidic residues. Residues 905–919 (LSSQDSEPKPVNNQV) show a composition bias toward polar residues.

This sequence belongs to the PDP family. Component of the PRC2 (polycomb repressive complex 2) complex which regulates histone methylation on histone H3K27.

The protein resides in the nucleus. In terms of biological role, may influence gene expression by regulating the function of the PRC2 complex and modulating H3K27me3 level. In Arabidopsis thaliana (Mouse-ear cress), this protein is PWWP domain-containing protein 4.